The primary structure comprises 281 residues: Large ribosomal subunit protein uL2 (281 aa).

The interval 220-281 (VRGSVMNPND…RRRDGKALSK (62 aa)) is disordered. Residues 258 to 271 (KTRKKNKQSNKMIM) are compositionally biased toward basic residues. The segment covering 272–281 (RRRDGKALSK) has biased composition (basic and acidic residues).

This sequence belongs to the universal ribosomal protein uL2 family. In terms of assembly, part of the 50S ribosomal subunit. Forms a bridge to the 30S subunit in the 70S ribosome.

One of the primary rRNA binding proteins. Required for association of the 30S and 50S subunits to form the 70S ribosome, for tRNA binding and peptide bond formation. It has been suggested to have peptidyltransferase activity; this is somewhat controversial. Makes several contacts with the 16S rRNA in the 70S ribosome. This chain is Large ribosomal subunit protein uL2, found in Lachnoclostridium phytofermentans (strain ATCC 700394 / DSM 18823 / ISDg) (Clostridium phytofermentans).